The primary structure comprises 180 residues: Adenine phosphoribosyltransferase (180 aa).

At serine 2 the chain carries N-acetylserine. Phosphoserine is present on residues serine 15 and serine 30. Tyrosine 60 bears the Phosphotyrosine mark. A Phosphoserine modification is found at serine 66. Lysine 114 is modified (N6-acetyllysine). Threonine 135 bears the Phosphothreonine mark.

Belongs to the purine/pyrimidine phosphoribosyltransferase family. As to quaternary structure, homodimer.

It localises to the cytoplasm. It carries out the reaction AMP + diphosphate = 5-phospho-alpha-D-ribose 1-diphosphate + adenine. The protein operates within purine metabolism; AMP biosynthesis via salvage pathway; AMP from adenine: step 1/1. Its function is as follows. Catalyzes a salvage reaction resulting in the formation of AMP, that is energically less costly than de novo synthesis. The protein is Adenine phosphoribosyltransferase of Mastomys natalensis (African soft-furred rat).